The following is a 289-amino-acid chain: tRNA pseudouridine synthase B (289 aa).

Aspartate 38 acts as the Nucleophile in catalysis.

The protein belongs to the pseudouridine synthase TruB family. Type 1 subfamily.

It catalyses the reaction uridine(55) in tRNA = pseudouridine(55) in tRNA. Responsible for synthesis of pseudouridine from uracil-55 in the psi GC loop of transfer RNAs. This Clostridium tetani (strain Massachusetts / E88) protein is tRNA pseudouridine synthase B.